The primary structure comprises 547 residues: Glucose-6-phosphate isomerase (547 aa).

The active-site Proton donor is the Glu-353. Active-site residues include His-384 and Lys-512.

The protein belongs to the GPI family.

Its subcellular location is the cytoplasm. The catalysed reaction is alpha-D-glucose 6-phosphate = beta-D-fructose 6-phosphate. It participates in carbohydrate biosynthesis; gluconeogenesis. It functions in the pathway carbohydrate degradation; glycolysis; D-glyceraldehyde 3-phosphate and glycerone phosphate from D-glucose: step 2/4. Catalyzes the reversible isomerization of glucose-6-phosphate to fructose-6-phosphate. The protein is Glucose-6-phosphate isomerase of Pseudoalteromonas atlantica (strain T6c / ATCC BAA-1087).